The chain runs to 211 residues: Large ribosomal subunit protein uL3 (211 aa).

It belongs to the universal ribosomal protein uL3 family. In terms of assembly, part of the 50S ribosomal subunit. Forms a cluster with proteins L14 and L19.

In terms of biological role, one of the primary rRNA binding proteins, it binds directly near the 3'-end of the 23S rRNA, where it nucleates assembly of the 50S subunit. The chain is Large ribosomal subunit protein uL3 from Citrifermentans bemidjiense (strain ATCC BAA-1014 / DSM 16622 / JCM 12645 / Bem) (Geobacter bemidjiensis).